A 141-amino-acid polypeptide reads, in one-letter code: Histone H2B (141 aa).

The span at 1–10 (MPPKAAEKKP) shows a compositional bias: basic and acidic residues. Positions 1–49 (MPPKAAEKKPSTGGKAPAGGKAPAEKKEAGKKTAAAASGDKKKRGKTRK) are disordered. Residues Lys-8 and Lys-9 each carry the N6-acetyllysine; alternate modification. Residues Lys-8 and Lys-9 each participate in a glycyl lysine isopeptide (Lys-Gly) (interchain with G-Cter in SUMO); alternate cross-link. Low complexity predominate over residues 11-22 (STGGKAPAGGKA). Lys-15 bears the N6-acetyllysine mark. The residue at position 26 (Lys-26) is an N6-acetyllysine; alternate. Lys-26 is covalently cross-linked (Glycyl lysine isopeptide (Lys-Gly) (interchain with G-Cter in SUMO); alternate). Lys-27 participates in a covalent cross-link: Glycyl lysine isopeptide (Lys-Gly) (interchain with G-Cter in SUMO). A Glycyl lysine isopeptide (Lys-Gly) (interchain with G-Cter in ubiquitin) cross-link involves residue Lys-135.

It belongs to the histone H2B family. In terms of assembly, the nucleosome is a histone octamer containing two molecules each of H2A, H2B, H3 and H4 assembled in one H3-H4 heterotetramer and two H2A-H2B heterodimers. The octamer wraps approximately 147 bp of DNA. Monoubiquitinated by the ubc2-bre1 complex to form H2BK123ub1. H2BK123ub1 gives a specific tag for epigenetic transcriptional activation and is also prerequisite for H3K4me and H3K79me formation. H2BK123ub1 also modulates the formation of double-strand breaks during meiosis and is a prerequisite for DNA-damage checkpoint activation. Post-translationally, acetylated by gcn5 to form H2BK11ac and H2BK16ac. H2BK16ac can also be formed by esa1. Acetylation of N-terminal lysines and particularly formation of H2BK11acK16ac has a positive effect on transcription. In terms of processing, sumoylation to form H2BK6su or H2BK7su, and probably also H2BK16su or H2BK17su, occurs preferentially near the telomeres and represses gene transcription.

It is found in the nucleus. The protein localises to the chromosome. Core component of nucleosome. Nucleosomes wrap and compact DNA into chromatin, limiting DNA accessibility to the cellular machineries which require DNA as a template. Histones thereby play a central role in transcription regulation, DNA repair, DNA replication and chromosomal stability. DNA accessibility is regulated via a complex set of post-translational modifications of histones, also called histone code, and nucleosome remodeling. The polypeptide is Histone H2B (htb1) (Aspergillus niger (strain ATCC MYA-4892 / CBS 513.88 / FGSC A1513)).